A 349-amino-acid chain; its full sequence is Protein RecA (349 aa).

67 to 74 (GPESSGKT) is a binding site for ATP.

It belongs to the RecA family.

The protein localises to the cytoplasm. In terms of biological role, can catalyze the hydrolysis of ATP in the presence of single-stranded DNA, the ATP-dependent uptake of single-stranded DNA by duplex DNA, and the ATP-dependent hybridization of homologous single-stranded DNAs. It interacts with LexA causing its activation and leading to its autocatalytic cleavage. This is Protein RecA from Chlamydia abortus (strain DSM 27085 / S26/3) (Chlamydophila abortus).